Consider the following 669-residue polypeptide: DNA ligase (669 aa).

NAD(+)-binding positions include 32–36, 81–82, and glutamate 113; these read DAEYD and SL. Residue lysine 115 is the N6-AMP-lysine intermediate of the active site. 4 residues coordinate NAD(+): arginine 136, glutamate 173, lysine 290, and lysine 314. Zn(2+) is bound by residues cysteine 408, cysteine 411, cysteine 426, and cysteine 432. A BRCT domain is found at 592–669; that stretch reads AVDSALAGKI…DEQALIEFLK (78 aa).

The protein belongs to the NAD-dependent DNA ligase family. LigA subfamily. Mg(2+) is required as a cofactor. Requires Mn(2+) as cofactor.

The catalysed reaction is NAD(+) + (deoxyribonucleotide)n-3'-hydroxyl + 5'-phospho-(deoxyribonucleotide)m = (deoxyribonucleotide)n+m + AMP + beta-nicotinamide D-nucleotide.. Its function is as follows. DNA ligase that catalyzes the formation of phosphodiester linkages between 5'-phosphoryl and 3'-hydroxyl groups in double-stranded DNA using NAD as a coenzyme and as the energy source for the reaction. It is essential for DNA replication and repair of damaged DNA. The protein is DNA ligase of Vibrio cholerae serotype O1 (strain ATCC 39541 / Classical Ogawa 395 / O395).